Consider the following 595-residue polypeptide: Probable hydrolase M10 (595 aa).

Positions 1-23 (MRFTSTILLRVAVLLSLGGGSQT) are cleaved as a signal peptide. 6 N-linked (GlcNAc...) asparagine glycosylation sites follow: Asn-59, Asn-87, Asn-266, Asn-436, Asn-457, and Asn-561.

Belongs to the beta-lactamase family.

It participates in secondary metabolite biosynthesis. Its function is as follows. Probable hydrolase; part of the gene cluster that mediates the biosynthesis of squalestatin S1 (SQS1, also known as zaragozic acid A), a heavily oxidized fungal polyketide that offers potent cholesterol lowering activity by targeting squalene synthase (SS). SQS1 is composed of a 2,8-dioxobicyclic[3.2.1]octane-3,4,5-tricarboxyclic acid core that is connected to two lipophilic polyketide arms. These initial steps feature the priming of an unusual benzoic acid starter unit onto the highly reducing polyketide synthase pks2, followed by oxaloacetate extension and product release to generate a tricarboxylic acid containing product. The phenylalanine ammonia lyase (PAL) M7 and the acyl-CoA ligase M9 are involved in transforming phenylalanine into benzoyl-CoA. The citrate synthase-like protein R3 is involved in connecting the C-alpha-carbons of the hexaketide chain and oxaloacetate to afford the tricarboxylic acid unit. The potential hydrolytic enzymes, M8 and M10, are in close proximity to pks2 and may participate in product release. On the other side, the tetraketide arm is synthesized by a the squalestatin tetraketide synthase pks1 and enzymatically esterified to the core in the last biosynthetic step, by the acetyltransferase M4. The biosynthesis of the tetraketide must involve 3 rounds of chain extension. After the first and second rounds methyl-transfer occurs, and in all rounds of extension the ketoreductase and dehydratase are active. The enoyl reductase and C-MeT of pks1 are not active in the final round of extension. The acetyltransferase M4 appears to have a broad substrate selectivity for its acyl CoA substrate, allowing the in vitro synthesis of novel squalestatins. The biosynthesis of SQS1 requires several oxidative steps likely performed by oxidoreductases M1, R1 and R2. Finally, in support of the identification of the cluster as being responsible for SQS1 production, the cluster contains a gene encoding a putative squalene synthase (SS) R6, suggesting a likely mechanism for self-resistance. In Phoma sp. (strain ATCC 20986 / MF5453), this protein is Probable hydrolase M10.